Consider the following 125-residue polypeptide: Phosphoribosyl-AMP cyclohydrolase (125 aa).

Position 74 (D74) interacts with Mg(2+). C75 contacts Zn(2+). Residues D76 and D78 each contribute to the Mg(2+) site. Zn(2+) contacts are provided by C92 and C99.

This sequence belongs to the PRA-CH family. Homodimer. Mg(2+) is required as a cofactor. It depends on Zn(2+) as a cofactor.

The protein localises to the cytoplasm. It catalyses the reaction 1-(5-phospho-beta-D-ribosyl)-5'-AMP + H2O = 1-(5-phospho-beta-D-ribosyl)-5-[(5-phospho-beta-D-ribosylamino)methylideneamino]imidazole-4-carboxamide. It functions in the pathway amino-acid biosynthesis; L-histidine biosynthesis; L-histidine from 5-phospho-alpha-D-ribose 1-diphosphate: step 3/9. Catalyzes the hydrolysis of the adenine ring of phosphoribosyl-AMP. This is Phosphoribosyl-AMP cyclohydrolase from Pelobacter propionicus (strain DSM 2379 / NBRC 103807 / OttBd1).